A 238-amino-acid polypeptide reads, in one-letter code: Pyridoxine 5'-phosphate synthase (238 aa).

N7 serves as a coordination point for 3-amino-2-oxopropyl phosphate. 9-10 (DH) contributes to the 1-deoxy-D-xylulose 5-phosphate binding site. A 3-amino-2-oxopropyl phosphate-binding site is contributed by R18. Residue H43 is the Proton acceptor of the active site. Residues R45 and H50 each coordinate 1-deoxy-D-xylulose 5-phosphate. E70 (proton acceptor) is an active-site residue. T100 contacts 1-deoxy-D-xylulose 5-phosphate. H190 (proton donor) is an active-site residue. Residues G191 and 212–213 (GH) contribute to the 3-amino-2-oxopropyl phosphate site.

It belongs to the PNP synthase family. In terms of assembly, homooctamer; tetramer of dimers.

Its subcellular location is the cytoplasm. It catalyses the reaction 3-amino-2-oxopropyl phosphate + 1-deoxy-D-xylulose 5-phosphate = pyridoxine 5'-phosphate + phosphate + 2 H2O + H(+). It functions in the pathway cofactor biosynthesis; pyridoxine 5'-phosphate biosynthesis; pyridoxine 5'-phosphate from D-erythrose 4-phosphate: step 5/5. In terms of biological role, catalyzes the complicated ring closure reaction between the two acyclic compounds 1-deoxy-D-xylulose-5-phosphate (DXP) and 3-amino-2-oxopropyl phosphate (1-amino-acetone-3-phosphate or AAP) to form pyridoxine 5'-phosphate (PNP) and inorganic phosphate. The sequence is that of Pyridoxine 5'-phosphate synthase from Prochlorococcus marinus subsp. pastoris (strain CCMP1986 / NIES-2087 / MED4).